The following is an 80-amino-acid chain: Defensin-like protein 207 (80 aa).

Positions 1-29 (MAKNLNSVSFIVLLLVLLVASTEILKSDA) are cleaved as a signal peptide. 3 disulfides stabilise this stretch: Cys-38/Cys-64, Cys-50/Cys-75, and Cys-54/Cys-77.

The protein belongs to the DEFL family.

It localises to the secreted. This chain is Defensin-like protein 207, found in Arabidopsis thaliana (Mouse-ear cress).